A 449-amino-acid chain; its full sequence is Pentalenene oxygenase (449 aa).

Residues 251–273 traverse the membrane as a helical segment; it reads VITVMAAGTETVAGTLTWIFHLL. Position 393 (C393) interacts with heme.

It belongs to the cytochrome P450 family.

It localises to the membrane. The enzyme catalyses pentalenene + 4 reduced [2Fe-2S]-[ferredoxin] + 2 O2 + 4 H(+) = pentalen-13-al + 4 oxidized [2Fe-2S]-[ferredoxin] + 3 H2O. It functions in the pathway antibiotic biosynthesis; neopentalenolactone biosynthesis. In terms of biological role, catalyzes the conversion of pentalenene to pentalen-13-al by stepwise oxidation via pentalen-13-ol, a precursor of neopentalenolactone antibiotic. The protein is Pentalenene oxygenase (ptlI) of Streptomyces avermitilis (strain ATCC 31267 / DSM 46492 / JCM 5070 / NBRC 14893 / NCIMB 12804 / NRRL 8165 / MA-4680).